The chain runs to 602 residues: Sulfite reductase [NADPH] hemoprotein beta-component (602 aa).

The segment at 1–23 (MDDTKTASPAPARAYETPPAERP) is disordered. Residues Cys-458, Cys-464, Cys-503, and Cys-507 each coordinate [4Fe-4S] cluster. Cys-507 is a siroheme binding site.

The protein belongs to the nitrite and sulfite reductase 4Fe-4S domain family. As to quaternary structure, alpha(8)-beta(8). The alpha component is a flavoprotein, the beta component is a hemoprotein. Siroheme is required as a cofactor. The cofactor is [4Fe-4S] cluster.

The enzyme catalyses hydrogen sulfide + 3 NADP(+) + 3 H2O = sulfite + 3 NADPH + 4 H(+). It participates in sulfur metabolism; hydrogen sulfide biosynthesis; hydrogen sulfide from sulfite (NADPH route): step 1/1. Component of the sulfite reductase complex that catalyzes the 6-electron reduction of sulfite to sulfide. This is one of several activities required for the biosynthesis of L-cysteine from sulfate. This Methylobacterium sp. (strain 4-46) protein is Sulfite reductase [NADPH] hemoprotein beta-component.